Consider the following 278-residue polypeptide: Large ribosomal subunit protein uL2c (278 aa).

The interval Val-224–Ser-267 is disordered.

This sequence belongs to the universal ribosomal protein uL2 family. Part of the 50S ribosomal subunit.

The protein resides in the plastid. The protein localises to the chloroplast. The protein is Large ribosomal subunit protein uL2c (rpl2) of Huperzia lucidula (Shining clubmoss).